A 489-amino-acid chain; its full sequence is N-succinylglutamate 5-semialdehyde dehydrogenase (489 aa).

An NAD(+)-binding site is contributed by glycine 223–glycine 228. Active-site residues include glutamate 246 and cysteine 280.

The protein belongs to the aldehyde dehydrogenase family. AstD subfamily.

It carries out the reaction N-succinyl-L-glutamate 5-semialdehyde + NAD(+) + H2O = N-succinyl-L-glutamate + NADH + 2 H(+). The protein operates within amino-acid degradation; L-arginine degradation via AST pathway; L-glutamate and succinate from L-arginine: step 4/5. In terms of biological role, catalyzes the NAD-dependent reduction of succinylglutamate semialdehyde into succinylglutamate. The sequence is that of N-succinylglutamate 5-semialdehyde dehydrogenase from Aeromonas hydrophila subsp. hydrophila (strain ATCC 7966 / DSM 30187 / BCRC 13018 / CCUG 14551 / JCM 1027 / KCTC 2358 / NCIMB 9240 / NCTC 8049).